Reading from the N-terminus, the 565-residue chain is FACT complex subunit ctc-1 (565 aa).

Disordered stretches follow at residues Gly-151–Gly-173 and Leu-477–Ala-565. Positions Asn-152 to Gly-165 are enriched in gly residues. Acidic residues-rich tracts occupy residues Gly-478–Ala-489, Asp-500–Tyr-522, and Gly-532–Glu-553.

Belongs to the SSRP1 family. As to quaternary structure, forms a stable heterodimer with ctc-2/spt16. The dimer of ctc-1 and ctc-2 weakly associates with multiple molecules of nhp-1/nhp6 to form the FACT complex.

It localises to the nucleus. It is found in the chromosome. Functionally, component of the FACT complex, a general chromatin factor that acts to reorganize nucleosomes. The FACT complex is involved in multiple processes that require DNA as a template such as mRNA elongation, DNA replication and DNA repair. During transcription elongation the FACT complex acts as a histone chaperone that both destabilizes and restores nucleosomal structure. It facilitates the passage of RNA polymerase II and transcription by promoting the dissociation of one histone H2A-H2B dimer from the nucleosome, then subsequently promotes the reestablishment of the nucleosome following the passage of RNA polymerase II. In Neurospora crassa (strain ATCC 24698 / 74-OR23-1A / CBS 708.71 / DSM 1257 / FGSC 987), this protein is FACT complex subunit ctc-1 (ctc-1).